Here is a 491-residue protein sequence, read N- to C-terminus: Probable cytosol aminopeptidase (491 aa).

Residues K264 and D269 each contribute to the Mn(2+) site. The active site involves K276. Residues D287, D346, and E348 each contribute to the Mn(2+) site. R350 is a catalytic residue.

This sequence belongs to the peptidase M17 family. Requires Mn(2+) as cofactor.

It localises to the cytoplasm. It catalyses the reaction Release of an N-terminal amino acid, Xaa-|-Yaa-, in which Xaa is preferably Leu, but may be other amino acids including Pro although not Arg or Lys, and Yaa may be Pro. Amino acid amides and methyl esters are also readily hydrolyzed, but rates on arylamides are exceedingly low.. The enzyme catalyses Release of an N-terminal amino acid, preferentially leucine, but not glutamic or aspartic acids.. Presumably involved in the processing and regular turnover of intracellular proteins. Catalyzes the removal of unsubstituted N-terminal amino acids from various peptides. In Xylella fastidiosa (strain M12), this protein is Probable cytosol aminopeptidase.